A 461-amino-acid polypeptide reads, in one-letter code: Elongation factor 1-alpha (461 aa).

Glycine 2 bears the N,N,N-trimethylglycine mark. One can recognise a tr-type G domain in the interval 5-242 (KIHINIVVIG…DAILPPSRPT (238 aa)). Residues 14 to 21 (GHVDSGKS) are G1. 14-21 (GHVDSGKS) contacts GTP. A G2 region spans residues 70 to 74 (GITID). A G3 region spans residues 91-94 (DAPG). Residues 153–156 (NKMD) and 194–196 (SGW) each bind GTP. The G4 stretch occupies residues 153 to 156 (NKMD). The tract at residues 194-196 (SGW) is G5. Glutamate 301 and glutamate 374 each carry 5-glutamyl glycerylphosphorylethanolamine.

This sequence belongs to the TRAFAC class translation factor GTPase superfamily. Classic translation factor GTPase family. EF-Tu/EF-1A subfamily.

The protein localises to the cytoplasm. It catalyses the reaction GTP + H2O = GDP + phosphate + H(+). Its function is as follows. Translation elongation factor that catalyzes the GTP-dependent binding of aminoacyl-tRNA (aa-tRNA) to the A-site of ribosomes during the elongation phase of protein synthesis. Base pairing between the mRNA codon and the aa-tRNA anticodon promotes GTP hydrolysis, releasing the aa-tRNA from EEF1A1 and allowing its accommodation into the ribosome. The growing protein chain is subsequently transferred from the P-site peptidyl tRNA to the A-site aa-tRNA, extending it by one amino acid through ribosome-catalyzed peptide bond formation. The protein is Elongation factor 1-alpha (eef1a) of Oryzias latipes (Japanese rice fish).